Reading from the N-terminus, the 294-residue chain is Cell division protein FtsQ (294 aa).

Residues 1–26 (MARGPNRRRVDRVPGERRRRLARAMA) lie on the Cytoplasmic side of the membrane. The chain crosses the membrane as a helical span at residues 27–49 (LALPSILALAALGGAATLGWRVG). The Periplasmic segment spans residues 50-294 (WKSDLLRVRE…GPQGRSSSLR (245 aa)). A POTRA domain is found at 55–123 (LRVREIRFEG…PALEVQLAER (69 aa)). Positions 266–294 (AGRRGEPDGRSSYAAGGGGGPQGRSSSLR) are disordered.

It belongs to the FtsQ/DivIB family. FtsQ subfamily.

It is found in the cell inner membrane. Its function is as follows. Essential cell division protein. The sequence is that of Cell division protein FtsQ from Anaeromyxobacter sp. (strain K).